The primary structure comprises 358 residues: Alanine racemase (358 aa).

Lysine 35 serves as the catalytic Proton acceptor; specific for D-alanine. An N6-(pyridoxal phosphate)lysine modification is found at lysine 35. Substrate is bound at residue arginine 131. The active-site Proton acceptor; specific for L-alanine is the tyrosine 253. Residue methionine 301 participates in substrate binding.

It belongs to the alanine racemase family. The cofactor is pyridoxal 5'-phosphate.

It catalyses the reaction L-alanine = D-alanine. It participates in amino-acid biosynthesis; D-alanine biosynthesis; D-alanine from L-alanine: step 1/1. Its function is as follows. Catalyzes the interconversion of L-alanine and D-alanine. May also act on other amino acids. This chain is Alanine racemase (alr), found in Alteromonas mediterranea (strain DSM 17117 / CIP 110805 / LMG 28347 / Deep ecotype).